The primary structure comprises 142 residues: Large ribosomal subunit protein uL11 (142 aa).

This sequence belongs to the universal ribosomal protein uL11 family. Part of the ribosomal stalk of the 50S ribosomal subunit. Interacts with L10 and the large rRNA to form the base of the stalk. L10 forms an elongated spine to which L12 dimers bind in a sequential fashion forming a multimeric L10(L12)X complex. In terms of processing, one or more lysine residues are methylated.

Functionally, forms part of the ribosomal stalk which helps the ribosome interact with GTP-bound translation factors. This Hahella chejuensis (strain KCTC 2396) protein is Large ribosomal subunit protein uL11.